A 360-amino-acid polypeptide reads, in one-letter code: Carbamoyl phosphate synthase small chain (360 aa).

Positions 1–169 (MTKRLLILED…TKTAYPAPGI (169 aa)) are CPSase. Positions 46, 220, and 222 each coordinate L-glutamine. A Glutamine amidotransferase type-1 domain is found at 172-358 (NIVLVDFGLK…LEMIDSWRCT (187 aa)). Cys247 serves as the catalytic Nucleophile. L-glutamine contacts are provided by Met248, Gln251, Asn289, Gly291, and Tyr292. Active-site residues include His331 and Asp333.

This sequence belongs to the CarA family. In terms of assembly, composed of two chains; the small (or glutamine) chain promotes the hydrolysis of glutamine to ammonia, which is used by the large (or ammonia) chain to synthesize carbamoyl phosphate. Tetramer of heterodimers (alpha,beta)4.

The catalysed reaction is hydrogencarbonate + L-glutamine + 2 ATP + H2O = carbamoyl phosphate + L-glutamate + 2 ADP + phosphate + 2 H(+). The enzyme catalyses L-glutamine + H2O = L-glutamate + NH4(+). The protein operates within amino-acid biosynthesis; L-arginine biosynthesis; carbamoyl phosphate from bicarbonate: step 1/1. Its pathway is pyrimidine metabolism; UMP biosynthesis via de novo pathway; (S)-dihydroorotate from bicarbonate: step 1/3. In terms of biological role, small subunit of the glutamine-dependent carbamoyl phosphate synthetase (CPSase). CPSase catalyzes the formation of carbamoyl phosphate from the ammonia moiety of glutamine, carbonate, and phosphate donated by ATP, constituting the first step of 2 biosynthetic pathways, one leading to arginine and/or urea and the other to pyrimidine nucleotides. The small subunit (glutamine amidotransferase) binds and cleaves glutamine to supply the large subunit with the substrate ammonia. This is Carbamoyl phosphate synthase small chain from Streptococcus pyogenes serotype M3 (strain SSI-1).